Reading from the N-terminus, the 323-residue chain is tRNA U34 carboxymethyltransferase (323 aa).

Residues lysine 91, tryptophan 105, lysine 110, glycine 130, aspartate 152–threonine 154, isoleucine 181–glutamate 182, methionine 196, tyrosine 200, and arginine 315 contribute to the carboxy-S-adenosyl-L-methionine site.

Belongs to the class I-like SAM-binding methyltransferase superfamily. CmoB family. As to quaternary structure, homotetramer.

It carries out the reaction carboxy-S-adenosyl-L-methionine + 5-hydroxyuridine(34) in tRNA = 5-carboxymethoxyuridine(34) in tRNA + S-adenosyl-L-homocysteine + H(+). In terms of biological role, catalyzes carboxymethyl transfer from carboxy-S-adenosyl-L-methionine (Cx-SAM) to 5-hydroxyuridine (ho5U) to form 5-carboxymethoxyuridine (cmo5U) at position 34 in tRNAs. The sequence is that of tRNA U34 carboxymethyltransferase from Shigella flexneri.